We begin with the raw amino-acid sequence, 124 residues long: Small ribosomal subunit protein uS12 (124 aa).

Residue D89 is modified to 3-methylthioaspartic acid. Residues 102–124 (LDTSGVNNRKHGRSKYGTKRPKS) are disordered. Over residues 109 to 124 (NRKHGRSKYGTKRPKS) the composition is skewed to basic residues.

The protein belongs to the universal ribosomal protein uS12 family. In terms of assembly, part of the 30S ribosomal subunit. Contacts proteins S8 and S17. May interact with IF1 in the 30S initiation complex.

With S4 and S5 plays an important role in translational accuracy. Functionally, interacts with and stabilizes bases of the 16S rRNA that are involved in tRNA selection in the A site and with the mRNA backbone. Located at the interface of the 30S and 50S subunits, it traverses the body of the 30S subunit contacting proteins on the other side and probably holding the rRNA structure together. The combined cluster of proteins S8, S12 and S17 appears to hold together the shoulder and platform of the 30S subunit. This Francisella tularensis subsp. novicida (strain U112) protein is Small ribosomal subunit protein uS12.